A 103-amino-acid polypeptide reads, in one-letter code: Pyrimidine/purine nucleoside phosphorylase (103 aa).

This sequence belongs to the nucleoside phosphorylase PpnP family.

The catalysed reaction is a purine D-ribonucleoside + phosphate = a purine nucleobase + alpha-D-ribose 1-phosphate. The enzyme catalyses adenosine + phosphate = alpha-D-ribose 1-phosphate + adenine. It carries out the reaction cytidine + phosphate = cytosine + alpha-D-ribose 1-phosphate. It catalyses the reaction guanosine + phosphate = alpha-D-ribose 1-phosphate + guanine. The catalysed reaction is inosine + phosphate = alpha-D-ribose 1-phosphate + hypoxanthine. The enzyme catalyses thymidine + phosphate = 2-deoxy-alpha-D-ribose 1-phosphate + thymine. It carries out the reaction uridine + phosphate = alpha-D-ribose 1-phosphate + uracil. It catalyses the reaction xanthosine + phosphate = alpha-D-ribose 1-phosphate + xanthine. Its function is as follows. Catalyzes the phosphorolysis of diverse nucleosides, yielding D-ribose 1-phosphate and the respective free bases. Can use uridine, adenosine, guanosine, cytidine, thymidine, inosine and xanthosine as substrates. Also catalyzes the reverse reactions. The polypeptide is Pyrimidine/purine nucleoside phosphorylase (Shewanella frigidimarina (strain NCIMB 400)).